We begin with the raw amino-acid sequence, 126 residues long: uncharacterized protein (126 aa).

Residues 1–23 form the signal peptide; sequence MLKKLIMGFFLLILLGIAGVAVM.

This is an uncharacterized protein from Archaeoglobus fulgidus (strain ATCC 49558 / DSM 4304 / JCM 9628 / NBRC 100126 / VC-16).